The chain runs to 551 residues: Chaperonin GroEL (551 aa).

ATP contacts are provided by residues 30–33 (TLGP), lysine 51, 87–91 (DGTTT), glycine 415, and aspartate 496.

This sequence belongs to the chaperonin (HSP60) family. In terms of assembly, forms a cylinder of 14 subunits composed of two heptameric rings stacked back-to-back. Interacts with the co-chaperonin GroES.

Its subcellular location is the cytoplasm. It carries out the reaction ATP + H2O + a folded polypeptide = ADP + phosphate + an unfolded polypeptide.. Together with its co-chaperonin GroES, plays an essential role in assisting protein folding. The GroEL-GroES system forms a nano-cage that allows encapsulation of the non-native substrate proteins and provides a physical environment optimized to promote and accelerate protein folding. In Maricaulis maris (strain MCS10) (Caulobacter maris), this protein is Chaperonin GroEL.